The chain runs to 349 residues: N-acetyl-gamma-glutamyl-phosphate reductase (349 aa).

Residue cysteine 149 is part of the active site.

The protein belongs to the NAGSA dehydrogenase family. Type 1 subfamily.

The protein resides in the cytoplasm. The enzyme catalyses N-acetyl-L-glutamate 5-semialdehyde + phosphate + NADP(+) = N-acetyl-L-glutamyl 5-phosphate + NADPH + H(+). It participates in amino-acid biosynthesis; L-arginine biosynthesis; N(2)-acetyl-L-ornithine from L-glutamate: step 3/4. Functionally, catalyzes the NADPH-dependent reduction of N-acetyl-5-glutamyl phosphate to yield N-acetyl-L-glutamate 5-semialdehyde. The sequence is that of N-acetyl-gamma-glutamyl-phosphate reductase from Acinetobacter baumannii (strain SDF).